We begin with the raw amino-acid sequence, 597 residues long: Elongation factor 4 (597 aa).

One can recognise a tr-type G domain in the interval 2–184 (DHIRNFSIIA…ALVAKVPPPK (183 aa)). Residues 14–19 (DHGKST) and 131–134 (NKID) contribute to the GTP site.

Belongs to the TRAFAC class translation factor GTPase superfamily. Classic translation factor GTPase family. LepA subfamily.

The protein localises to the cell inner membrane. It carries out the reaction GTP + H2O = GDP + phosphate + H(+). Its function is as follows. Required for accurate and efficient protein synthesis under certain stress conditions. May act as a fidelity factor of the translation reaction, by catalyzing a one-codon backward translocation of tRNAs on improperly translocated ribosomes. Back-translocation proceeds from a post-translocation (POST) complex to a pre-translocation (PRE) complex, thus giving elongation factor G a second chance to translocate the tRNAs correctly. Binds to ribosomes in a GTP-dependent manner. This is Elongation factor 4 from Paraburkholderia phytofirmans (strain DSM 17436 / LMG 22146 / PsJN) (Burkholderia phytofirmans).